Consider the following 483-residue polypeptide: Protein DETOXIFICATION 6 (483 aa).

12 consecutive transmembrane segments (helical) span residues A38–V58, G69–A89, F113–M133, I146–V166, A187–L207, G211–V231, A263–L283, V292–A312, V334–I354, L376–V396, I405–L425, and L436–A456.

It belongs to the multi antimicrobial extrusion (MATE) (TC 2.A.66.1) family.

Its subcellular location is the membrane. The sequence is that of Protein DETOXIFICATION 6 from Arabidopsis thaliana (Mouse-ear cress).